Consider the following 484-residue polypeptide: Probable endopeptidase p60 (484 aa).

The first 27 residues, 1–27 (MNMKKATIAATAGIAVTAFAAPTIASA), serve as a signal peptide directing secretion. The 44-residue stretch at 28-71 (STVVVEAGDTLWGIAQSKGTTVDAIKKANNLTTDKIVPGQKLQV) folds into the LysM 1 domain. In terms of domain architecture, SH3b spans 80 to 144 (KTEKSVSATW…VNGKYLTDKA (65 aa)). The tract at residues 150-192 (APTQEVKKETTTQQAAPAAETKTEVKQTTQATTPAPKVAETKE) is disordered. The segment covering 160–169 (TTQQAAPAAE) has biased composition (low complexity). Positions 201-244 (TTHAVKSGDTIWALSVKYGVSVQDIMSWNNLSSSSIYVGQKLAI) constitute a LysM 2 domain. The interval 254–367 (KAEVKTEAPA…QGSSNNNSNS (114 aa)) is disordered. Low complexity-rich tracts occupy residues 273-282 (KENTNTNTAT) and 289-367 (ATQQ…NSNS). The interval 311 to 355 (TNTNANKTNTNTNTNTNTNNTNTNTPSKNTNTNSNTNTNTNSNTN) is 19 X 2 AA tandem repeats of T-N. The NlpC/P60 domain occupies 366–484 (NSSASAIIAE…GKYLVGFGRV (119 aa)). C396 acts as the Nucleophile in catalysis. The active-site Proton acceptor is H446. Residue N458 is part of the active site.

This sequence belongs to the peptidase C40 family.

The protein resides in the cell surface. Its subcellular location is the secreted. In terms of biological role, this major extracellular protein may be involved in the invasion of non-professional phagocytic cells by Listeria. The polypeptide is Probable endopeptidase p60 (iap) (Listeria monocytogenes serovar 1/2a (strain ATCC BAA-679 / EGD-e)).